A 332-amino-acid chain; its full sequence is Biotin synthase (332 aa).

Residues 53-283 (WGKGGVHACS…VHPRKTIKFA (231 aa)) form the Radical SAM core domain. [4Fe-4S] cluster is bound by residues cysteine 71, cysteine 75, and cysteine 78. Positions 150, 211, and 281 each coordinate [2Fe-2S] cluster.

Belongs to the radical SAM superfamily. Biotin synthase family. Homodimer. It depends on [4Fe-4S] cluster as a cofactor. Requires [2Fe-2S] cluster as cofactor.

The enzyme catalyses (4R,5S)-dethiobiotin + (sulfur carrier)-SH + 2 reduced [2Fe-2S]-[ferredoxin] + 2 S-adenosyl-L-methionine = (sulfur carrier)-H + biotin + 2 5'-deoxyadenosine + 2 L-methionine + 2 oxidized [2Fe-2S]-[ferredoxin]. It participates in cofactor biosynthesis; biotin biosynthesis; biotin from 7,8-diaminononanoate: step 2/2. Its function is as follows. Catalyzes the conversion of dethiobiotin (DTB) to biotin by the insertion of a sulfur atom into dethiobiotin via a radical-based mechanism. The polypeptide is Biotin synthase (Chlorobium luteolum (strain DSM 273 / BCRC 81028 / 2530) (Pelodictyon luteolum)).